A 392-amino-acid polypeptide reads, in one-letter code: Cytochrome b (392 aa).

Helical transmembrane passes span 38–58 (FGSL…FLAM), 82–104 (WLLR…LHIF), 119–139 (VRCL…TGYV), and 185–205 (FFSL…LHLA). The heme b site is built by His-88 and His-102. His-189 and His-203 together coordinate heme b. Residue His-208 coordinates a ubiquinone. 4 helical membrane passes run 231–251 (FYVK…IWIF), 295–315 (SGGV…PFFK), 327–347 (IHQG…WIGC), and 354–373 (FVTI…AITP).

This sequence belongs to the cytochrome b family. As to quaternary structure, the main subunits of complex b-c1 are: cytochrome b, cytochrome c1 and the Rieske protein. Requires heme b as cofactor.

Its subcellular location is the mitochondrion inner membrane. Its function is as follows. Component of the ubiquinol-cytochrome c reductase complex (complex III or cytochrome b-c1 complex) that is part of the mitochondrial respiratory chain. The b-c1 complex mediates electron transfer from ubiquinol to cytochrome c. Contributes to the generation of a proton gradient across the mitochondrial membrane that is then used for ATP synthesis. This is Cytochrome b (MT-CYB) from Pisum sativum (Garden pea).